The primary structure comprises 98 residues: NADH-ubiquinone oxidoreductase chain 4L (98 aa).

The next 3 helical transmembrane spans lie at 1-21 (MSMV…GLLM), 29-49 (SLLC…MTIL), and 61-81 (IILL…LVMV).

It belongs to the complex I subunit 4L family. In terms of assembly, core subunit of respiratory chain NADH dehydrogenase (Complex I) which is composed of 45 different subunits.

The protein localises to the mitochondrion inner membrane. The catalysed reaction is a ubiquinone + NADH + 5 H(+)(in) = a ubiquinol + NAD(+) + 4 H(+)(out). Its function is as follows. Core subunit of the mitochondrial membrane respiratory chain NADH dehydrogenase (Complex I) which catalyzes electron transfer from NADH through the respiratory chain, using ubiquinone as an electron acceptor. Part of the enzyme membrane arm which is embedded in the lipid bilayer and involved in proton translocation. The chain is NADH-ubiquinone oxidoreductase chain 4L (MT-ND4L) from Otaria byronia (South American sea lion).